The following is a 400-amino-acid chain: Endoplasmin (400 aa).

At K1 the chain carries N6-succinyllysine. N42 carries N-linked (GlcNAc...) asparagine glycosylation. S44 carries the phosphoserine modification. Position 76 is an N6-acetyllysine (K76). 2 N-linked (GlcNAc...) asparagine glycosylation sites follow: N78 and N99. Position 230 is an N6-succinyllysine (K230). Residues 346 to 400 are disordered; the sequence is IDPEAQVEEEPEEEPEDTTEDTEQDEEEEVDAGTEEEEEEEQETAKESTAEKDEL. Positions 350–387 are enriched in acidic residues; it reads AQVEEEPEEEPEDTTEDTEQDEEEEVDAGTEEEEEEEQ. T379 carries the post-translational modification Phosphothreonine. The segment covering 388-400 has biased composition (basic and acidic residues); that stretch reads ETAKESTAEKDEL. The Prevents secretion from ER signature appears at 397 to 400; that stretch reads KDEL.

Belongs to the heat shock protein 90 family. As to quaternary structure, homodimer; disulfide-linked. Component of an EIF2 complex at least composed of CELF1/CUGBP1, CALR, CALR3, EIF2S1, EIF2S2, HSP90B1 and HSPA5. Part of a large chaperone multiprotein complex comprising DNAJB11, HSP90B1, HSPA5, HYOU, PDIA2, PDIA4, PDIA6, PPIB, SDF2L1, UGGT1 and very small amounts of ERP29, but not, or at very low levels, CALR nor CANX. Interacts with AIMP1; regulates its retention in the endoplasmic reticulum. Hyperglycosylated form interacts with OS9; promoting its degradation by the endoplasmic reticulum associated degradation (ERAD). Interacts with CNPY3. This interaction is disrupted in the presence of ATP. Interacts with TLR4 and TLR9, but not with TLR3. Interacts with MZB1 in a calcium-dependent manner. Interacts with METTL23. Interacts with IL1B; the interaction facilitates cargo translocation into the ERGIC. Interacts with EIF2AK3. Post-translationally, phosphorylated by CK2. N-glycosylated cotranslationally at Asn-217 by STT3A-containing OST-A complex: this glycosylation is constitutive. In response to various stress, 5 additional facultative sites (Asn-62, Asn-107, Asn-445, Asn-481 and Asn-502) can be glycosylated post-translationally by STT3B-containing OST-B complex, leading to a hyperglycosylated form that is degraded by the ER-associated degradation (ERAD) pathway. In normal conditions, the OST-A complex together with CCDC134 prevent glycosylation at facultative sites during protein folding, thereby preventing hyperglycosylation. Mechanistically, nascent HSP90B1 is tethered during translation to a specialized CCDC134-containing translocon that forms a microenvironment for its folding, in which STT3A associates with the SRT pseudosubstrate motif, and prevents access to facultative glycosylation sites until folding is completed, rendering its facultative sites inaccessible to the OST-B complex.

The protein localises to the endoplasmic reticulum lumen. It is found in the sarcoplasmic reticulum lumen. Its subcellular location is the melanosome. It catalyses the reaction ATP + H2O = ADP + phosphate + H(+). Functionally, ATP-dependent chaperone involved in the processing of proteins in the endoplasmic reticulum, regulating their transport. Together with MESD, acts as a modulator of the Wnt pathway by promoting the folding of LRP6, a coreceptor of the canonical Wnt pathway. When associated with CNPY3, required for proper folding of Toll-like receptors. Promotes folding and trafficking of TLR4 to the cell surface. May participate in the unfolding of cytosolic leaderless cargos (lacking the secretion signal sequence) such as the interleukin 1/IL-1 to facilitate their translocation into the ERGIC (endoplasmic reticulum-Golgi intermediate compartment) and secretion; the translocation process is mediated by the cargo receptor TMED10. This chain is Endoplasmin (HSP90B1), found in Mesocricetus auratus (Golden hamster).